A 378-amino-acid chain; its full sequence is Ribosomal RNA large subunit methyltransferase G (378 aa).

It belongs to the methyltransferase superfamily. RlmG family.

The protein resides in the cytoplasm. It carries out the reaction guanosine(1835) in 23S rRNA + S-adenosyl-L-methionine = N(2)-methylguanosine(1835) in 23S rRNA + S-adenosyl-L-homocysteine + H(+). In terms of biological role, specifically methylates the guanine in position 1835 (m2G1835) of 23S rRNA. The polypeptide is Ribosomal RNA large subunit methyltransferase G (Salmonella heidelberg (strain SL476)).